A 335-amino-acid chain; its full sequence is Large ribosomal subunit protein uL10 (335 aa).

Positions 300–335 (QVSEQAAEKKEEKKEEEKKGPSEEEIGGGLSSLFGG) are disordered. Residues 305-321 (AAEKKEEKKEEEKKGPS) show a composition bias toward basic and acidic residues. Residues 326–335 (GGGLSSLFGG) are compositionally biased toward gly residues.

Belongs to the universal ribosomal protein uL10 family. As to quaternary structure, part of the 50S ribosomal subunit. Forms part of the ribosomal stalk which helps the ribosome interact with GTP-bound translation factors. Forms a heptameric L10(L12)2(L12)2(L12)2 complex, where L10 forms an elongated spine to which the L12 dimers bind in a sequential fashion.

Functionally, forms part of the ribosomal stalk, playing a central role in the interaction of the ribosome with GTP-bound translation factors. The polypeptide is Large ribosomal subunit protein uL10 (Sulfolobus acidocaldarius (strain ATCC 33909 / DSM 639 / JCM 8929 / NBRC 15157 / NCIMB 11770)).